The sequence spans 206 residues: Cell division protein SepF (206 aa).

The segment covering 31 to 53 (EEKERRKTERQEQRQAVKQEKRT) has biased composition (basic and acidic residues). Residues 31 to 81 (EEKERRKTERQEQRQAVKQEKRTFPSQRPAFSEEAPTSSSSKLSAASGSSD) form a disordered region. A compositionally biased stretch (low complexity) spans 60–80 (AFSEEAPTSSSSKLSAASGSS).

It belongs to the SepF family. In terms of assembly, homodimer. Interacts with FtsZ.

The protein resides in the cytoplasm. In terms of biological role, cell division protein that is part of the divisome complex and is recruited early to the Z-ring. Probably stimulates Z-ring formation, perhaps through the cross-linking of FtsZ protofilaments. Its function overlaps with FtsA. This chain is Cell division protein SepF, found in Lachnoclostridium phytofermentans (strain ATCC 700394 / DSM 18823 / ISDg) (Clostridium phytofermentans).